A 305-amino-acid chain; its full sequence is GTPase Era (305 aa).

The region spanning Arg-13 to Glu-181 is the Era-type G domain. Residues Gly-21–Ser-28 form a G1 region. Position 21 to 28 (Gly-21 to Ser-28) interacts with GTP. The G2 stretch occupies residues Gln-47–His-51. The G3 stretch occupies residues Asp-68 to Gly-71. GTP-binding positions include Asp-68–Met-72 and Asn-130–Asp-133. Residues Asn-130–Asp-133 form a G4 region. The interval Leu-160 to Ala-162 is G5. A KH type-2 domain is found at Val-204 to Arg-288.

Belongs to the TRAFAC class TrmE-Era-EngA-EngB-Septin-like GTPase superfamily. Era GTPase family. As to quaternary structure, monomer.

Its subcellular location is the cytoplasm. It is found in the cell inner membrane. Functionally, an essential GTPase that binds both GDP and GTP, with rapid nucleotide exchange. Plays a role in 16S rRNA processing and 30S ribosomal subunit biogenesis and possibly also in cell cycle regulation and energy metabolism. In Marinobacter nauticus (strain ATCC 700491 / DSM 11845 / VT8) (Marinobacter aquaeolei), this protein is GTPase Era.